We begin with the raw amino-acid sequence, 591 residues long: Inactive metallocarboxypeptidase ECM14 (591 aa).

The first 21 residues, 1-21 (MRLFSHLAVLAILACAVPITA), serve as a signal peptide directing secretion. The propeptide occupies 22 to 175 (IPSFLSNSYP…QTIYESYPSS (154 aa)). A Peptidase M14 domain is found at 203-523 (DYQPFSVIVP…NAVMVLGRFL (321 aa)). Zn(2+)-binding residues include H265 and E268. Residues 265-268 (HARE), R323, and 340-341 (DR) each bind substrate. The cysteines at positions 334 and 357 are disulfide-linked. Residues N350, N381, and N386 are each glycosylated (N-linked (GlcNAc...) asparagine). H397 is a Zn(2+) binding site. Substrate is bound at residue 398–399 (SY). Positions 533–591 (DWEDESQRPKADEDDIPSENELDENDDSWIPYDYRNHDDQNEGEGYDNDEWGFRRRRKR) are disordered. Composition is skewed to acidic residues over residues 544 to 559 (DEDD…ENDD) and 573 to 582 (NEGEGYDNDE).

This sequence belongs to the peptidase M14 family. Zn(2+) is required as a cofactor.

The protein resides in the vacuole. It is found in the secreted. Inactive carboxypeptidase that may play a role in cell wall organization and biogenesis. This is Inactive metallocarboxypeptidase ECM14 (ECM14) from Paracoccidioides brasiliensis (strain Pb18).